Here is a 302-residue protein sequence, read N- to C-terminus: Large ribosomal subunit protein uL18 (302 aa).

This sequence belongs to the universal ribosomal protein uL18 family. Component of the large ribosomal subunit (LSU).

It localises to the cytoplasm. Its subcellular location is the nucleus. Component of the ribosome, a large ribonucleoprotein complex responsible for the synthesis of proteins in the cell. The small ribosomal subunit (SSU) binds messenger RNAs (mRNAs) and translates the encoded message by selecting cognate aminoacyl-transfer RNA (tRNA) molecules. The large subunit (LSU) contains the ribosomal catalytic site termed the peptidyl transferase center (PTC), which catalyzes the formation of peptide bonds, thereby polymerizing the amino acids delivered by tRNAs into a polypeptide chain. The nascent polypeptides leave the ribosome through a tunnel in the LSU and interact with protein factors that function in enzymatic processing, targeting, and the membrane insertion of nascent chains at the exit of the ribosomal tunnel. The protein is Large ribosomal subunit protein uL18 (RPL5) of Cucumis sativus (Cucumber).